The chain runs to 384 residues: tRNA-specific 2-thiouridylase MnmA (384 aa).

ATP contacts are provided by residues 9–16 (GMSGGVDS) and Met-35. An interaction with target base in tRNA region spans residues 95-97 (NPD). The active-site Nucleophile is Cys-100. A disulfide bond links Cys-100 and Cys-196. Residue Gly-124 participates in ATP binding. The interaction with tRNA stretch occupies residues 146-148 (KDQ). The Cysteine persulfide intermediate role is filled by Cys-196. The segment at 308-309 (RY) is interaction with tRNA.

The protein belongs to the MnmA/TRMU family.

The protein resides in the cytoplasm. It catalyses the reaction S-sulfanyl-L-cysteinyl-[protein] + uridine(34) in tRNA + AH2 + ATP = 2-thiouridine(34) in tRNA + L-cysteinyl-[protein] + A + AMP + diphosphate + H(+). Its function is as follows. Catalyzes the 2-thiolation of uridine at the wobble position (U34) of tRNA, leading to the formation of s(2)U34. The chain is tRNA-specific 2-thiouridylase MnmA from Paraburkholderia phymatum (strain DSM 17167 / CIP 108236 / LMG 21445 / STM815) (Burkholderia phymatum).